Here is a 123-residue protein sequence, read N- to C-terminus: Putative iron-sulfur cluster insertion protein ErpA (123 aa).

Iron-sulfur cluster is bound by residues Cys51, Cys115, and Cys117.

Belongs to the HesB/IscA family. Homodimer. Requires iron-sulfur cluster as cofactor.

Functionally, required for insertion of 4Fe-4S clusters. This Burkholderia cenocepacia (strain HI2424) protein is Putative iron-sulfur cluster insertion protein ErpA.